Consider the following 413-residue polypeptide: Ribulose bisphosphate carboxylase/oxygenase activase, chloroplastic (413 aa).

The transit peptide at 1–54 directs the protein to the chloroplast; that stretch reads MAATVSTIGAVNRTTLNNSNYGGLVPNSAFLGSRLKVSSRFTTSKMVTGNFKIV. 162–169 contacts ATP; the sequence is GGKGQGKS.

The protein belongs to the RuBisCO activase family.

It is found in the plastid. The protein resides in the chloroplast stroma. In terms of biological role, activation of RuBisCO (ribulose-1,5-bisphosphate carboxylase/oxygenase; EC 4.1.1.39) involves the ATP-dependent carboxylation of the epsilon-amino group of lysine leading to a carbamate structure. In Cucumis sativus (Cucumber), this protein is Ribulose bisphosphate carboxylase/oxygenase activase, chloroplastic.